Reading from the N-terminus, the 109-residue chain is ATP-dependent Clp protease adapter protein ClpS (109 aa).

Belongs to the ClpS family. Binds to the N-terminal domain of the chaperone ClpA.

Its function is as follows. Involved in the modulation of the specificity of the ClpAP-mediated ATP-dependent protein degradation. The protein is ATP-dependent Clp protease adapter protein ClpS of Lawsonia intracellularis (strain PHE/MN1-00).